The sequence spans 340 residues: Protein RecA (340 aa).

65–72 (GPESGGKT) lines the ATP pocket.

It belongs to the RecA family.

The protein localises to the cytoplasm. Can catalyze the hydrolysis of ATP in the presence of single-stranded DNA, the ATP-dependent uptake of single-stranded DNA by duplex DNA, and the ATP-dependent hybridization of homologous single-stranded DNAs. It interacts with LexA causing its activation and leading to its autocatalytic cleavage. The protein is Protein RecA of Thermus aquaticus.